A 366-amino-acid chain; its full sequence is ATP-dependent 6-phosphofructokinase 2 (366 aa).

ATP contacts are provided by residues Gly-15, 78 to 79 (KD), and 119 to 122 (GDGT). Asp-120 contacts Mg(2+). Residues 142–144 (TID), Arg-179, 186–188 (MGR), Glu-239, Arg-284, and 290–293 (HIQR) contribute to the substrate site. Asp-144 acts as the Proton acceptor in catalysis.

It belongs to the phosphofructokinase type A (PFKA) family. Mixed-substrate PFK group III subfamily. In terms of assembly, homodimer or homotetramer. Mg(2+) serves as cofactor.

It is found in the cytoplasm. It carries out the reaction beta-D-fructose 6-phosphate + ATP = beta-D-fructose 1,6-bisphosphate + ADP + H(+). Its pathway is carbohydrate degradation; glycolysis; D-glyceraldehyde 3-phosphate and glycerone phosphate from D-glucose: step 3/4. Its activity is regulated as follows. Subject to allosteric activation by ADP and other diphosphonucleosides, and inhibition by phosphoenolpyruvate. Catalyzes the phosphorylation of D-fructose 6-phosphate to fructose 1,6-bisphosphate by ATP, the first committing step of glycolysis. The sequence is that of ATP-dependent 6-phosphofructokinase 2 from Clostridium perfringens (strain 13 / Type A).